Reading from the N-terminus, the 152-residue chain is UPF0178 protein YPTS_2857 (152 aa).

Belongs to the UPF0178 family.

This is UPF0178 protein YPTS_2857 from Yersinia pseudotuberculosis serotype IB (strain PB1/+).